Here is a 385-residue protein sequence, read N- to C-terminus: Cytochrome b (385 aa).

A run of 4 helical transmembrane segments spans residues Phe32 to Met52, Trp76 to Gly98, Thr113 to Val133, and Phe179 to Ile199. Heme b contacts are provided by His82 and His96. His183 and His197 together coordinate heme b. His202 contacts a ubiquinone. 4 consecutive transmembrane segments (helical) span residues Phe226–Phe246, Leu290–Asp310, Leu322–Ala342, and Phe349–Pro369.

It belongs to the cytochrome b family. As to quaternary structure, fungal cytochrome b-c1 complex contains 10 subunits; 3 respiratory subunits, 2 core proteins and 5 low-molecular weight proteins. Cytochrome b-c1 complex is a homodimer. The cofactor is heme b.

The protein localises to the mitochondrion inner membrane. In terms of biological role, component of the ubiquinol-cytochrome c reductase complex (complex III or cytochrome b-c1 complex) that is part of the mitochondrial respiratory chain. The b-c1 complex mediates electron transfer from ubiquinol to cytochrome c. Contributes to the generation of a proton gradient across the mitochondrial membrane that is then used for ATP synthesis. The chain is Cytochrome b (cob) from Aspergillus terreus (strain NIH 2624 / FGSC A1156).